A 1107-amino-acid chain; its full sequence is Lon protease homolog, mitochondrial (1107 aa).

The N-terminal 31 residues, 1 to 31 (MLSRQRIPRILASRTSLAHSIRSFTSTTSSI), are a transit peptide targeting the mitochondrion. Disordered stretches follow at residues 32–152 (RPVA…PGDK) and 273–329 (PEAA…PYEP). The span at 51 to 60 (TNLSSFSTYT) shows a compositional bias: polar residues. The span at 80–101 (EEERKANVEHAEAEAKEAESKQ) shows a compositional bias: basic and acidic residues. Gly residues predominate over residues 122–141 (GAAGGSSAGSGSGADGGSGD). Residues 142 to 152 (GGKRGRKPGDK) show a composition bias toward basic and acidic residues. Residues 166–441 (VMAIPIAKRP…KALLVLKKEH (276 aa)) form the Lon N-terminal domain. An ATP-binding site is contributed by 594–601 (GPPGVGKT). A disordered region spans residues 808–858 (PESEALTEEGKAAQEETEKKKSEEAASGETSSPKAATEASEKETTEKPRVA). Residues 815–831 (EEGKAAQEETEKKKSEE) are compositionally biased toward basic and acidic residues. Over residues 832-845 (AASGETSSPKAATE) the composition is skewed to low complexity. Residues 846–856 (ASEKETTEKPR) are compositionally biased toward basic and acidic residues. The Lon proteolytic domain occupies 891–1077 (VTPPGVTMGL…SEVFDLIFPK (187 aa)). Catalysis depends on residues serine 983 and lysine 1026. The disordered stretch occupies residues 1085 to 1107 (KSRIIEDDKSEKEESKKKNDDDE).

The protein belongs to the peptidase S16 family. Homohexamer or homoheptamer. Organized in a ring with a central cavity.

The protein localises to the mitochondrion matrix. It carries out the reaction Hydrolysis of proteins in presence of ATP.. ATP-dependent serine protease that mediates the selective degradation of misfolded, unassembled or oxidatively damaged polypeptides as well as certain short-lived regulatory proteins in the mitochondrial matrix. May also have a chaperone function in the assembly of inner membrane protein complexes. Participates in the regulation of mitochondrial gene expression and in the maintenance of the integrity of the mitochondrial genome. Binds to mitochondrial DNA in a site-specific manner. In Neurospora crassa (strain ATCC 24698 / 74-OR23-1A / CBS 708.71 / DSM 1257 / FGSC 987), this protein is Lon protease homolog, mitochondrial (pim1).